Reading from the N-terminus, the 203-residue chain is Cytochrome c oxidase assembly protein CtaG (203 aa).

The Cytoplasmic portion of the chain corresponds to 1-16 (MADQQEKDQKLKKQQR). Residues 17-39 (SNATIAFACLSFFVCMIGAAYAS) form a helical; Signal-anchor for type II membrane protein membrane-spanning segment. The Periplasmic segment spans residues 40–203 (VPLYRIFCQV…VKAETPTNGS (164 aa)).

It belongs to the COX11/CtaG family.

The protein resides in the cell inner membrane. Exerts its effect at some terminal stage of cytochrome c oxidase synthesis, probably by being involved in the insertion of the copper B into subunit I. The protein is Cytochrome c oxidase assembly protein CtaG of Brucella anthropi (strain ATCC 49188 / DSM 6882 / CCUG 24695 / JCM 21032 / LMG 3331 / NBRC 15819 / NCTC 12168 / Alc 37) (Ochrobactrum anthropi).